The primary structure comprises 420 residues: MFGRGPSKKSDNTKFYEILGVPKSASPEDLKKAYKKAAIKNHPDKGGDPEKFKELAQAYEVLSDPEKREIYDQYGEDALKEGMGGGGGGHDPFDIFSSFFGGGPFGGNTSRQRRQRRGEDVVHPLKVSLEDVYLGTMKKLSLSRNALCSKCNGKGSKSGASLKCGGCQGSGMKVSIRQLGPGMIQQMQHACNECKGTGETINDRDRCPQCKGDKVIPEKKVLEVNVEKGMQHSQKITFEGQADEAPDTVTGDIVFVLQQKEHPKFKRKGEDLFVEHTLSLTEALCGFQFVLTHLDGRSLLIKSNPGEVVKPDSYKAISDEGMPIYQRPFMKGKLYIHFTVEFPDSLSPDQTKALEAVLPKPSTAQLSDMEIDECEETTLHDVNIEDEMRRKAQAQREAYDDDDEDDDHPGGAQRVQCAQQ.

The 62-residue stretch at 14-75 (KFYEILGVPK…EKREIYDQYG (62 aa)) folds into the J domain. The CR-type zinc-finger motif lies at 135–219 (GTMKKLSLSR…CKGDKVIPEK (85 aa)). Zn(2+) contacts are provided by Cys148, Cys151, Cys164, Cys167, Cys191, Cys194, Cys207, and Cys210. 4 CXXCXGXG motif repeats span residues 148–155 (CSKCNGKG), 164–171 (CGGCQGSG), 191–198 (CNECKGTG), and 207–214 (CPQCKGDK). The tract at residues 376–420 (ETTLHDVNIEDEMRRKAQAQREAYDDDDEDDDHPGGAQRVQCAQQ) is disordered. Residues 377–390 (TTLHDVNIEDEMRR) are compositionally biased toward basic and acidic residues. Cys417 carries the cysteine methyl ester modification. Residue Cys417 is the site of S-farnesyl cysteine attachment. Residues 418–420 (AQQ) constitute a propeptide, removed in mature form.

This sequence belongs to the DnaJ family. A/I subfamily. Homodimer. The cofactor is Zn(2+). Post-translationally, farnesylated. In terms of tissue distribution, roots, shoots, flowers, siliques and cotyledons.

It localises to the membrane. In terms of biological role, plays a continuous role in plant development probably in the structural organization of compartments. This chain is Chaperone protein dnaJ 3 (ATJ3), found in Arabidopsis thaliana (Mouse-ear cress).